The chain runs to 264 residues: MNRIEERLAALKEEGKKAFITYTTAGLPDYDTTKKIMFAQEKAGIDIMEIGVPFSDPIADGPVIQDASFKAIQNGASLEGIFTMMGKVRKAGLNSPVVFMLYYNTVYHYGVENFVNKCIENGVDGLIIPDLPFEEQGEIKDVLAKNEKSPILIQLVSPVSKGRIPMLLENARGFVYCVSQMGVTGKGANFHSQIREYLTEVKKESKIPVMMGFGIRTAADVAPLEDIIDGAIVGSHFIKLLEANNYSEEAATDYVATFKKELNA.

Residues glutamate 49 and aspartate 60 each act as proton acceptor in the active site.

This sequence belongs to the TrpA family. In terms of assembly, tetramer of two alpha and two beta chains.

It catalyses the reaction (1S,2R)-1-C-(indol-3-yl)glycerol 3-phosphate + L-serine = D-glyceraldehyde 3-phosphate + L-tryptophan + H2O. The protein operates within amino-acid biosynthesis; L-tryptophan biosynthesis; L-tryptophan from chorismate: step 5/5. In terms of biological role, the alpha subunit is responsible for the aldol cleavage of indoleglycerol phosphate to indole and glyceraldehyde 3-phosphate. This Lachnospira eligens (strain ATCC 27750 / DSM 3376 / VPI C15-48 / C15-B4) (Eubacterium eligens) protein is Tryptophan synthase alpha chain.